The following is a 326-amino-acid chain: Serpentine receptor class gamma-14 (326 aa).

7 consecutive transmembrane segments (helical) span residues 36–56, 67–83, 115–135, 156–176, 204–224, 243–263, and 274–294; these read QIIYIITGIFLNSAVLGTILW, FFTLFSVDCIANISILI, IIMLLTHHVSICKSLLQVLLV, LKYVISAVFLIPFCADWNIAI, FQLVFIIIALSFTFICTAITL, VIISIGFTFKVLFQIYYSFFF, and GFSFLALDFLTVGSPIVMICV.

This sequence belongs to the nematode receptor-like protein srg family.

The protein resides in the membrane. In Caenorhabditis elegans, this protein is Serpentine receptor class gamma-14 (srg-14).